A 1322-amino-acid chain; its full sequence is Myosin-1 (1322 aa).

The 687-residue stretch at 42–728 (AGVSDMTLLT…TLFALETMRD (687 aa)) folds into the Myosin motor domain. 135–142 (GESGAGKT) lines the ATP pocket. Serine 369 carries the phosphoserine modification. An actin-binding region spans residues 417–499 (VIGVLDIYGF…PGIFSALNDA (83 aa)). 2 IQ domains span residues 732–752 (HNMA…REES) and 753–778 (ARRI…YGHQ). The region spanning 786–980 (RRRFSLISMR…SGEPPTSVSR (195 aa)) is the TH1 domain. Disordered stretches follow at residues 966 to 1090 (IVSV…MPSY) and 1137 to 1162 (VQQL…ATPA). 2 stretches are compositionally biased toward low complexity: residues 1000–1017 (SRPV…PTTT) and 1027–1056 (GGTA…ASGA). Composition is skewed to polar residues over residues 1078-1087 (PATSAPSSGM) and 1137-1148 (VQQLGSSSTAQT). The region spanning 1184–1243 (RRLPRYRALYDFETQEAGELPLRTGDIVELEEKEENGWWLVKKGSTEGWSPADYLELIAE) is the SH3 domain. The tract at residues 1246–1300 (AAKPRPPPPAKPASAKPAAAPARVSQSSVTSSWTPPDSHAAPVAVMPGMGDPGGF) is disordered. The span at 1257–1267 (PASAKPAAAPA) shows a compositional bias: low complexity. Residues 1269–1280 (VSQSSVTSSWTP) are compositionally biased toward polar residues.

This sequence belongs to the TRAFAC class myosin-kinesin ATPase superfamily. Myosin family. Phosphorylation of the TEDS site (Ser-369) is required for the polarization of the actin cytoskeleton. Phosphorylation probably activates the myosin-I ATPase activity.

It localises to the cytoplasm. The protein resides in the cytoskeleton. It is found in the actin patch. In terms of biological role, type-I myosin implicated in the organization of the actin cytoskeleton. Required for proper actin cytoskeleton polarization. At the cell cortex, assembles in patch-like structures together with proteins from the actin-polymerizing machinery and promotes actin assembly. Functions as actin nucleation-promoting factor (NPF) for the Arp2/3 complex. The sequence is that of Myosin-1 (MYO1) from Malassezia globosa (strain ATCC MYA-4612 / CBS 7966) (Dandruff-associated fungus).